The sequence spans 940 residues: Valine--tRNA ligase (940 aa).

The 'HIGH' region signature appears at 47–57 (PNVTGILHMGH). A 'KMSKS' region motif is present at residues 564 to 568 (KLSKS). Lys567 lines the ATP pocket. Residues 873 to 937 (VEHIAKEKTR…ELQSILDKLA (65 aa)) are a coiled coil.

The protein belongs to the class-I aminoacyl-tRNA synthetase family. ValS type 1 subfamily. Monomer.

It is found in the cytoplasm. The enzyme catalyses tRNA(Val) + L-valine + ATP = L-valyl-tRNA(Val) + AMP + diphosphate. In terms of biological role, catalyzes the attachment of valine to tRNA(Val). As ValRS can inadvertently accommodate and process structurally similar amino acids such as threonine, to avoid such errors, it has a 'posttransfer' editing activity that hydrolyzes mischarged Thr-tRNA(Val) in a tRNA-dependent manner. The chain is Valine--tRNA ligase from Chlamydia abortus (strain DSM 27085 / S26/3) (Chlamydophila abortus).